A 187-amino-acid chain; its full sequence is Adenylate kinase (187 aa).

Residue 10–15 participates in ATP binding; the sequence is GSGKGT. Residues 30-59 are NMP; the sequence is STGDLLRSEVVAGTPLGLQAKQVMAQGDLV. AMP is bound by residues Thr31, Arg36, 57–59, 85–88, and Gln92; these read DLV and GYPR. Residues 126-136 are LID; it reads GRAQAEGREDD. Arg127 contributes to the ATP binding site. Residues Arg133 and Arg144 each coordinate AMP. ATP is bound at residue Gly172.

Belongs to the adenylate kinase family. In terms of assembly, monomer.

Its subcellular location is the cytoplasm. It catalyses the reaction AMP + ATP = 2 ADP. It functions in the pathway purine metabolism; AMP biosynthesis via salvage pathway; AMP from ADP: step 1/1. Catalyzes the reversible transfer of the terminal phosphate group between ATP and AMP. Plays an important role in cellular energy homeostasis and in adenine nucleotide metabolism. The chain is Adenylate kinase from Xylella fastidiosa (strain M23).